The chain runs to 225 residues: Single-pass membrane and coiled-coil domain-containing protein 3 (225 aa).

A coiled-coil region spans residues 69 to 92 (IIQAMTKIQKELQKIDEALKDQLE). The helical transmembrane segment at 155–175 (IGTSLLGSIGVAVLSLGIDMI) threads the bilayer. Residues 182–209 (AVERTQLQAAIKSYEKHLEEFKAASAKY) are a coiled coil.

Its subcellular location is the membrane. This Mus musculus (Mouse) protein is Single-pass membrane and coiled-coil domain-containing protein 3 (Smco3).